The sequence spans 116 residues: Large ribosomal subunit protein eL22B (116 aa).

Belongs to the eukaryotic ribosomal protein eL22 family.

This chain is Large ribosomal subunit protein eL22B (rpl22a), found in Dictyostelium discoideum (Social amoeba).